Reading from the N-terminus, the 508-residue chain is MPNDQTHPFRGVNALPFEERYDNFIGGEWVAPVSGRYFTNTTPITGAEIGQIARSEAGDIELALDAAHAAKEKWGATSPAERANIMLKIADRMERNLELLATAETWDNGKPIRETMAADLPLAIDHFRYFAGVLRAQEGSISQIDDDTVAYHFHEPLGVVGQIIPWNFPLLMACWKLAPAIAAGNCVVLKPAEQTPAGIMVWANLIGDLLPPGVLNIVNGFGLEAGKPLASSNRIAKIAFTGETTTGRLIMQYASENLIPVTLELGGKSPNIFFADVAREDDDFFDKALEGFTMFALNQGEVCTCPSRVLIQESIYDKFMERAVQRVQAIKQGDPRESDTMIGAQASSEQKEKILSYLDIGKKEGAEVLTGGKAADLGGELSGGYYIEPTIFRGNNKMRIFQEEIFGPVVSVTTFKDQAEALEIANDTLYGLGAGVWSRDANTCYRMGRGIKAGRVWTNCYHAYPAHAAFGGYKQSGIGRETHKMMLDHYQQTKNMLVSYSPKKLGFF.

Catalysis depends on residues Glu264 and Cys303.

The protein belongs to the aldehyde dehydrogenase family.

It catalyses the reaction acetaldehyde + NAD(+) + H2O = acetate + NADH + 2 H(+). It participates in organosulfur degradation. Functionally, catalyzes the NAD(+)-dependent oxidation of acetaldehyde to acetate. The chain is Aldehyde dehydrogenase from Paracoccus denitrificans (strain Pd 1222).